Here is a 235-residue protein sequence, read N- to C-terminus: Ferric nitrobindin-like protein (235 aa).

A disordered region spans residues 1–59 (MSDLASEGSDPAERASEHSNGNAPADRPARRSGDQAVADAAERAKATGSRNIPVLPDLP). A GXWXGXG motif is present at residues 85–91 (GVWRGEG).

It belongs to the nitrobindin family.

The polypeptide is Ferric nitrobindin-like protein (Nocardia farcinica (strain IFM 10152)).